The sequence spans 421 residues: Testin (421 aa).

Residues Met-92–Asp-199 form the PET domain. The segment at Glu-133–Cys-164 is disordered. Residues Pro-155–Cys-164 show a composition bias toward basic and acidic residues. LIM zinc-binding domains lie at Tyr-234–Glu-297, Pro-299–Val-359, and Gln-362–Ser-421.

The protein belongs to the prickle / espinas / testin family. As to quaternary structure, interacts via LIM domain 1 with ZYX. Interacts (via LIM domain 3) with ENAH and VASP. Interacts with ALKBH4, talin, actin, alpha-actinin, GRIP1 and PXN. Interacts (via LIM domain 2) with ACTL7A (via N-terminus). Heterodimer with ACTL7A; the heterodimer interacts with ENAH to form a heterotrimer.

The protein localises to the cytoplasm. It localises to the cell junction. Its subcellular location is the focal adhesion. Functionally, scaffold protein that may play a role in cell adhesion, cell spreading and in the reorganization of the actin cytoskeleton. Plays a role in the regulation of cell proliferation. May act as a tumor suppressor. In Pan troglodytes (Chimpanzee), this protein is Testin (TES).